The primary structure comprises 166 residues: uncharacterized protein (166 aa).

Residues 25–116 (PEEPPLWVPP…QGADEVHSQH (92 aa)) form a disordered region. A Phosphoserine modification is found at S105.

This is an uncharacterized protein from Rattus norvegicus (Rat).